Here is a 98-residue protein sequence, read N- to C-terminus: U-scoloptoxin(16)-Er9a (98 aa).

The signal sequence occupies residues Met-1 to Gly-24.

This sequence belongs to the scoloptoxin-16 family. Post-translationally, contains 4 disulfide bonds. As to expression, expressed by the venom gland.

It is found in the secreted. The protein is U-scoloptoxin(16)-Er9a of Ethmostigmus rubripes (Giant centipede).